The primary structure comprises 239 residues: MVAFFSPLREPLSLFRISTSPRSFRKVPHLLLLRQTSPCSSQSFSIIFISLSSSNSREGIVFTLSFLIFESNTLLFSSRKSFTLSAFPSGRTVKYTLALLPSLLSSTLVMLTTPKSVGAFSTTKLAIISFICSPSLSFFLLILYLLQHIFVLFKLFAVEYVRYELVYFLFLEYRTRQQSSRVLVVLYLPEHEKFRKSVLNLSVSVTILAVLQGILFYEKVIFTEFYDVEYSPPSSSYEF.

3 helical membrane passes run 125–144 (LAII…LILY), 149–171 (IFVL…FLFL), and 197–216 (SVLN…GILF).

The protein localises to the cell membrane. This is an uncharacterized protein from Aquifex aeolicus (strain VF5).